The chain runs to 374 residues: Chaperone protein DnaJ (374 aa).

The region spanning 5 to 70 is the J domain; it reads DYYEVLGVNL…RKRASYDQFG (66 aa). Residues 133-210 form a CR-type zinc finger; it reads GLSRTIKVPT…CHGQGRQQQT (78 aa). 8 residues coordinate Zn(2+): cysteine 146, cysteine 149, cysteine 162, cysteine 165, cysteine 184, cysteine 187, cysteine 198, and cysteine 201. CXXCXGXG motif repeat units follow at residues 146-153, 162-169, 184-191, and 198-205; these read CKTCNGSG, CPRCNGSG, CSVCRGRG, and CTDCHGQG.

Belongs to the DnaJ family. In terms of assembly, homodimer. The cofactor is Zn(2+).

The protein localises to the cytoplasm. Its function is as follows. Participates actively in the response to hyperosmotic and heat shock by preventing the aggregation of stress-denatured proteins and by disaggregating proteins, also in an autonomous, DnaK-independent fashion. Unfolded proteins bind initially to DnaJ; upon interaction with the DnaJ-bound protein, DnaK hydrolyzes its bound ATP, resulting in the formation of a stable complex. GrpE releases ADP from DnaK; ATP binding to DnaK triggers the release of the substrate protein, thus completing the reaction cycle. Several rounds of ATP-dependent interactions between DnaJ, DnaK and GrpE are required for fully efficient folding. Also involved, together with DnaK and GrpE, in the DNA replication of plasmids through activation of initiation proteins. The sequence is that of Chaperone protein DnaJ from Coxiella burnetii (strain RSA 493 / Nine Mile phase I).